Here is a 265-residue protein sequence, read N- to C-terminus: Glutamate racemase (265 aa).

Residues 7 to 8 (DS) and 39 to 40 (YG) contribute to the substrate site. Residue Cys-70 is the Proton donor/acceptor of the active site. Position 71 to 72 (71 to 72 (NT)) interacts with substrate. Cys-177 (proton donor/acceptor) is an active-site residue.

It belongs to the aspartate/glutamate racemases family.

It carries out the reaction L-glutamate = D-glutamate. It participates in cell wall biogenesis; peptidoglycan biosynthesis. Its function is as follows. Provides the (R)-glutamate required for cell wall biosynthesis. The chain is Glutamate racemase from Prochlorococcus marinus (strain NATL2A).